A 1740-amino-acid polypeptide reads, in one-letter code: DNA polymerase (1740 aa).

Residues 472–491 (IEMPHNQEDSDSEKEDEDTD) form a disordered region. The segment covering 480–491 (DSDSEKEDEDTD) has biased composition (acidic residues). The DOD-type homing endonuclease domain occupies 1189-1334 (VWGFFMGDGS…LFYLLKSLGY (146 aa)). The segment at 1673–1701 (PKESGSKTAKKPYQSQKLQKTKSSNKSQI) is disordered. Polar residues predominate over residues 1685–1700 (YQSQKLQKTKSSNKSQ).

Belongs to the DNA polymerase type-B family. Post-translationally, this protein undergoes a protein self splicing that involves a post-translational excision of the intervening region (intein) followed by peptide ligation.

It catalyses the reaction DNA(n) + a 2'-deoxyribonucleoside 5'-triphosphate = DNA(n+1) + diphosphate. The chain is DNA polymerase (POLB) from Acanthamoeba polyphaga (Amoeba).